The following is a 1169-amino-acid chain: C5a peptidase (1169 aa).

A signal peptide spans 1-31 (MRKKQKLPFDKLAIALMSTSILLNAQSDIKA). Residues 33–111 (TVTEDTPATE…ETIRDLNDPS (79 aa)) are disordered. A compositionally biased stretch (polar residues) spans 48–67 (PQQTAVSEEAPSSSSKETNP). The Peptidase S8 domain maps to 101–583 (KETIRDLNDP…AGAVDAKKAS (483 aa)). The span at 102–111 (ETIRDLNDPS) shows a compositional bias: basic and acidic residues. Residues Asp132, His195, and Ser514 each act as charge relay system in the active site. Residues 1028-1135 (NLLEGHSNKP…RDQLPTTNDK (108 aa)) are disordered. Composition is skewed to basic and acidic residues over residues 1033 to 1056 (HSNK…KPEQ), 1063 to 1073 (PDKKPEAKPEQ), and 1080 to 1092 (PDKK…EKDS). 4 consecutive repeat copies span residues 1036-1052 (KPEQ…TPET), 1053-1069 (KPEQ…KPEA), 1070-1086 (KPEQ…KPET), and 1087-1103 (KPEK…TPQK). The tract at residues 1036 to 1103 (KPEQDGSDQV…GQTPGKTPQK (68 aa)) is 4 X 17 AA tandem repeats. The span at 1093 to 1108 (SGQTPGKTPQKGQPSR) shows a compositional bias: polar residues. Positions 1129–1133 (LPTTN) match the LPXTG sorting signal motif. Thr1132 carries the post-translational modification Pentaglycyl murein peptidoglycan amidated threonine. Residues 1133–1169 (NDKDTNRLHLLKLVMTTFFFGLVAHIFKTKRQKETKK) constitute a propeptide, removed by sortase.

The protein belongs to the peptidase S8 family. Post-translationally, cleaved by SpeB protease; leading to its degradation. Degradation by SpeB is probably strictly regulated to preserve integrity of C5a peptidase.

The protein localises to the secreted. The protein resides in the cell wall. The enzyme catalyses The primary cleavage site is at 67-His-|-Lys-68 in human C5a with a minor secondary cleavage site at 58-Ala-|-Ser-59.. Functionally, this virulence factor of S.pyogenes specifically cleaves the human serum chemotaxin C5a at '68-Lys-|-Asp-69' bond near its C-terminus, destroying its ability to serve as a chemoattractant. In Streptococcus pyogenes serotype M3 (strain ATCC BAA-595 / MGAS315), this protein is C5a peptidase (scpA).